Here is a 197-residue protein sequence, read N- to C-terminus: TGEKSISCSECGKCFIKSSELTVHQMTHIGEKTYSCSECGKCFASLSHLRVHQKIHTGEKPFSCSECGKCFLNRGSLVRHHRTHTGEKPFFCSECGKRFAASSDLRVHRRTHTGEKPFSCSECEKRFLNPWSLVRHYRTHTGEKPFSCSECGKCFARSSDLTVHRRRSHTKEKPFSCSECGKCFTSSSELTVHLRTH.

7 consecutive C2H2-type zinc fingers follow at residues 6–28, 34–56, 62–84, 90–112, 118–140, 146–169, and 175–197; these read ISCSECGKCFIKSSELTVHQMTH, YSCSECGKCFASLSHLRVHQKIH, FSCSECGKCFLNRGSLVRHHRTH, FFCSECGKRFAASSDLRVHRRTH, FSCSECEKRFLNPWSLVRHYRTH, FSCSECGKCFARSSDLTVHRRRSH, and FSCSECGKCFTSSSELTVHLRTH.

Belongs to the krueppel C2H2-type zinc-finger protein family.

It localises to the nucleus. May be involved in transcriptional regulation. This Xenopus laevis (African clawed frog) protein is Gastrula zinc finger protein XlCGF17.1.